Reading from the N-terminus, the 829-residue chain is Probable beta-glucosidase H (829 aa).

N-linked (GlcNAc...) asparagine glycosylation occurs at Asn-13. Asp-225 is a catalytic residue. N-linked (GlcNAc...) asparagine glycans are attached at residues Asn-304, Asn-473, Asn-602, Asn-627, and Asn-664. Positions 389–548 (RMLSNAVIHF…DPEQMVANAV (160 aa)) constitute a PA14 domain.

It belongs to the glycosyl hydrolase 3 family.

The protein resides in the secreted. The catalysed reaction is Hydrolysis of terminal, non-reducing beta-D-glucosyl residues with release of beta-D-glucose.. Its pathway is glycan metabolism; cellulose degradation. Functionally, beta-glucosidases are one of a number of cellulolytic enzymes involved in the degradation of cellulosic biomass. Catalyzes the last step releasing glucose from the inhibitory cellobiose. This Neosartorya fischeri (strain ATCC 1020 / DSM 3700 / CBS 544.65 / FGSC A1164 / JCM 1740 / NRRL 181 / WB 181) (Aspergillus fischerianus) protein is Probable beta-glucosidase H (bglH).